Here is a 293-residue protein sequence, read N- to C-terminus: Proteinase T (293 aa).

A propeptide spanning residues 1-12 (EFIEQDAVVTIS) is cleaved from the precursor. A Peptidase S8 domain is found at 19–293 (PWGLARISSQ…VLINNGEGSA (275 aa)). 2 disulfide bridges follow: C46–C137 and C192–C262. Residues D51, H83, and S238 each act as charge relay system in the active site.

Belongs to the peptidase S8 family.

Its function is as follows. Serine proteinase. The polypeptide is Proteinase T (PROT) (Parengyodontium album (Tritirachium album)).